Here is a 224-residue protein sequence, read N- to C-terminus: MSRSSSSMATVLVVLMVVSAGGLSPPCAAAAKEEKPVVVLPPAAAPGEAPSADAAAFVRSCCDTALQADRDGSSFCYYHLLPYAAFFEGNQVKVAEVAATILSTNLWVYVDQLRKVQGGAGKGDPNLNACVDDFSVAAGENITREALQSLGRLAAAGNGKRSKEDLENAQKWIKGVEKPYNGGIGKASGCEIGYLFTYSDDLPAQKTLGYTFDTASSLINHIKL.

An N-terminal signal peptide occupies residues 1-30 (MSRSSSSMATVLVVLMVVSAGGLSPPCAAA). The N-linked (GlcNAc...) asparagine glycan is linked to N141.

It is found in the secreted. This is an uncharacterized protein from Oryza sativa subsp. japonica (Rice).